Reading from the N-terminus, the 112-residue chain is Integration host factor subunit alpha (112 aa).

This sequence belongs to the bacterial histone-like protein family. Heterodimer of an alpha and a beta chain.

Functionally, this protein is one of the two subunits of integration host factor, a specific DNA-binding protein that functions in genetic recombination as well as in transcriptional and translational control. The sequence is that of Integration host factor subunit alpha from Sinorhizobium fredii (strain NBRC 101917 / NGR234).